Here is a 463-residue protein sequence, read N- to C-terminus: Phosphoglucosamine mutase (463 aa).

Serine 110 functions as the Phosphoserine intermediate in the catalytic mechanism. Mg(2+) contacts are provided by serine 110, aspartate 255, aspartate 257, and aspartate 259. Serine 110 is modified (phosphoserine).

Belongs to the phosphohexose mutase family. The cofactor is Mg(2+). Activated by phosphorylation.

The enzyme catalyses alpha-D-glucosamine 1-phosphate = D-glucosamine 6-phosphate. In terms of biological role, catalyzes the conversion of glucosamine-6-phosphate to glucosamine-1-phosphate. The protein is Phosphoglucosamine mutase of Koribacter versatilis (strain Ellin345).